The sequence spans 102 residues: Thioredoxin (102 aa).

Residues 1-102 form the Thioredoxin domain; it reads MVQVVSQENF…SLIKLISKHQ (102 aa). A disulfide bond links cysteine 28 and cysteine 31.

Belongs to the thioredoxin family.

In terms of biological role, participates in various redox reactions through the reversible oxidation of its active center dithiol to a disulfide and catalyzes dithiol-disulfide exchange reactions. The polypeptide is Thioredoxin (trxA) (Chlamydia trachomatis serovar D (strain ATCC VR-885 / DSM 19411 / UW-3/Cx)).